The following is a 322-amino-acid chain: Protein farnesyltransferase/geranylgeranyltransferase type-1 subunit alpha (322 aa).

Residues M1–Q27 are disordered. PFTA repeat units lie at residues R62–E95, Q103–D136, K138–N171, E173–P205, R213–T246, and N287–I321.

The protein belongs to the protein prenyltransferase subunit alpha family. As to quaternary structure, heterodimer of fntA and fntB (farnesyltransferase). Heterodimer of an alpha and a beta subunit. Mg(2+) is required as a cofactor.

The enzyme catalyses L-cysteinyl-[protein] + (2E,6E)-farnesyl diphosphate = S-(2E,6E)-farnesyl-L-cysteinyl-[protein] + diphosphate. It carries out the reaction geranylgeranyl diphosphate + L-cysteinyl-[protein] = S-geranylgeranyl-L-cysteinyl-[protein] + diphosphate. Its function is as follows. Catalyzes the transfer of a farnesyl or geranyl-geranyl moiety from farnesyl or geranyl-geranyl diphosphate to a cysteine at the fourth position from the C-terminus of several proteins having the C-terminal sequence Cys-aliphatic-aliphatic-X. The alpha subunit is thought to participate in a stable complex with the substrate. The beta subunit binds the peptide substrate. This is Protein farnesyltransferase/geranylgeranyltransferase type-1 subunit alpha (fntA) from Dictyostelium discoideum (Social amoeba).